The primary structure comprises 397 residues: CCA-adding enzyme (397 aa).

Residues G32 and R35 each contribute to the ATP site. Residues G32 and R35 each coordinate CTP. D45 and D47 together coordinate Mg(2+). Residues R116, D159, R162, R165, and R168 each coordinate ATP. CTP-binding residues include R116, D159, R162, R165, and R168.

The protein belongs to the tRNA nucleotidyltransferase/poly(A) polymerase family. Bacterial CCA-adding enzyme type 3 subfamily. As to quaternary structure, homodimer. The cofactor is Mg(2+).

The catalysed reaction is a tRNA precursor + 2 CTP + ATP = a tRNA with a 3' CCA end + 3 diphosphate. It catalyses the reaction a tRNA with a 3' CCA end + 2 CTP + ATP = a tRNA with a 3' CCACCA end + 3 diphosphate. Catalyzes the addition and repair of the essential 3'-terminal CCA sequence in tRNAs without using a nucleic acid template. Adds these three nucleotides in the order of C, C, and A to the tRNA nucleotide-73, using CTP and ATP as substrates and producing inorganic pyrophosphate. tRNA 3'-terminal CCA addition is required both for tRNA processing and repair. Also involved in tRNA surveillance by mediating tandem CCA addition to generate a CCACCA at the 3' terminus of unstable tRNAs. While stable tRNAs receive only 3'-terminal CCA, unstable tRNAs are marked with CCACCA and rapidly degraded. The protein is CCA-adding enzyme of Levilactobacillus brevis (strain ATCC 367 / BCRC 12310 / CIP 105137 / JCM 1170 / LMG 11437 / NCIMB 947 / NCTC 947) (Lactobacillus brevis).